The primary structure comprises 46 residues: Protein krueppel (46 aa).

3 consecutive C2H2-type zinc fingers follow at residues 1-4 (MRLH), 10-32 (YQCL…LRVH), and 38-46 (YACEICPSR).

The protein belongs to the krueppel C2H2-type zinc-finger protein family.

The protein localises to the nucleus. Krueppel is a gap class segmentation protein. This Pholcus phalangioides (Longbodied cellar spider) protein is Protein krueppel (Kr).